The following is a 432-amino-acid chain: Adenylosuccinate synthetase (432 aa).

GTP-binding positions include 13-19 (GDEGKGK) and 41-43 (GHT). Aspartate 14 serves as the catalytic Proton acceptor. Aspartate 14 and glycine 41 together coordinate Mg(2+). IMP contacts are provided by residues 14–17 (DEGK), 39–42 (NAGH), threonine 130, arginine 144, glutamine 225, threonine 240, and arginine 304. Histidine 42 serves as the catalytic Proton donor. Residue 300-306 (AVTGRPR) coordinates substrate. Residues arginine 306, 332–334 (KLD), and 415–417 (STG) each bind GTP.

This sequence belongs to the adenylosuccinate synthetase family. As to quaternary structure, homodimer. Mg(2+) serves as cofactor.

The protein resides in the cytoplasm. It catalyses the reaction IMP + L-aspartate + GTP = N(6)-(1,2-dicarboxyethyl)-AMP + GDP + phosphate + 2 H(+). The protein operates within purine metabolism; AMP biosynthesis via de novo pathway; AMP from IMP: step 1/2. In terms of biological role, plays an important role in the de novo pathway of purine nucleotide biosynthesis. Catalyzes the first committed step in the biosynthesis of AMP from IMP. This chain is Adenylosuccinate synthetase, found in Mannheimia succiniciproducens (strain KCTC 0769BP / MBEL55E).